A 177-amino-acid polypeptide reads, in one-letter code: Large ribosomal subunit protein uL6 (177 aa).

It belongs to the universal ribosomal protein uL6 family. As to quaternary structure, part of the 50S ribosomal subunit.

Functionally, this protein binds to the 23S rRNA, and is important in its secondary structure. It is located near the subunit interface in the base of the L7/L12 stalk, and near the tRNA binding site of the peptidyltransferase center. The sequence is that of Large ribosomal subunit protein uL6 from Methanosarcina barkeri (strain Fusaro / DSM 804).